Consider the following 342-residue polypeptide: Serine/threonine-protein kinase SAPK1 (342 aa).

In terms of domain architecture, Protein kinase spans 4 to 260 (YEVMRDIGSG…IPEIKNHPWF (257 aa)). ATP-binding positions include 10-18 (IGSGNFGVA) and Lys33. Asp123 functions as the Proton acceptor in the catalytic mechanism. The segment at 253–342 (EIKNHPWFLK…ENSGDFVCAL (90 aa)) is C-terminal.

Belongs to the protein kinase superfamily. Ser/Thr protein kinase family. Phosphorylated. In terms of tissue distribution, expressed in leaf blades, leaf sheaths and roots. Expressed in shoots and roots of young seedlings.

It catalyses the reaction L-seryl-[protein] + ATP = O-phospho-L-seryl-[protein] + ADP + H(+). The enzyme catalyses L-threonyl-[protein] + ATP = O-phospho-L-threonyl-[protein] + ADP + H(+). Its activity is regulated as follows. Activated by phosphorylation in response to hyperosmotic stress within 5 minutes. In terms of biological role, may play a role in signal transduction of hyperosmotic response. In Oryza sativa subsp. japonica (Rice), this protein is Serine/threonine-protein kinase SAPK1 (SAPK1).